Consider the following 240-residue polypeptide: UDP-2,3-diacylglucosamine hydrolase (240 aa).

Mn(2+)-binding residues include Asp9, His11, Asp43, Asn81, and His116. 81 to 82 (NR) is a binding site for substrate. The substrate site is built by Asp124, Ser162, Lys166, Lys169, and His197. Mn(2+)-binding residues include His197 and His199.

The protein belongs to the LpxH family. Requires Mn(2+) as cofactor.

It is found in the cell inner membrane. It catalyses the reaction UDP-2-N,3-O-bis[(3R)-3-hydroxytetradecanoyl]-alpha-D-glucosamine + H2O = 2-N,3-O-bis[(3R)-3-hydroxytetradecanoyl]-alpha-D-glucosaminyl 1-phosphate + UMP + 2 H(+). Its pathway is glycolipid biosynthesis; lipid IV(A) biosynthesis; lipid IV(A) from (3R)-3-hydroxytetradecanoyl-[acyl-carrier-protein] and UDP-N-acetyl-alpha-D-glucosamine: step 4/6. Hydrolyzes the pyrophosphate bond of UDP-2,3-diacylglucosamine to yield 2,3-diacylglucosamine 1-phosphate (lipid X) and UMP by catalyzing the attack of water at the alpha-P atom. Involved in the biosynthesis of lipid A, a phosphorylated glycolipid that anchors the lipopolysaccharide to the outer membrane of the cell. This chain is UDP-2,3-diacylglucosamine hydrolase, found in Neisseria meningitidis serogroup C (strain 053442).